The primary structure comprises 203 residues: Endo-type membrane-bound lytic murein transglycosylase A (203 aa).

A signal peptide spans 1–15 (MKLRWFAFLVVILAG). A lipid anchor (N-palmitoyl cysteine) is attached at Cys-16. A lipid anchor (S-diacylglycerol cysteine) is attached at Cys-16.

Belongs to the transglycosylase Slt family.

The protein resides in the cell outer membrane. The enzyme catalyses Endolytic cleavage of the (1-&gt;4)-beta-glycosidic linkage between N-acetylmuramic acid (MurNAc) and N-acetylglucosamine (GlcNAc) residues in peptidoglycan with concomitant formation of a 1,6-anhydrobond in the MurNAc residue.. Murein-degrading enzyme. May play a role in recycling of muropeptides during cell elongation and/or cell division. Preferentially cleaves at a distance of more than two disaccharide units from the ends of the glycan chain. This Salmonella paratyphi C (strain RKS4594) protein is Endo-type membrane-bound lytic murein transglycosylase A.